The primary structure comprises 177 residues: Large ribosomal subunit protein uL6 (177 aa).

The residue at position 44 (lysine 44) is an N6-acetyllysine.

The protein belongs to the universal ribosomal protein uL6 family. In terms of assembly, part of the 50S ribosomal subunit.

Functionally, this protein binds to the 23S rRNA, and is important in its secondary structure. It is located near the subunit interface in the base of the L7/L12 stalk, and near the tRNA binding site of the peptidyltransferase center. The chain is Large ribosomal subunit protein uL6 from Escherichia fergusonii (strain ATCC 35469 / DSM 13698 / CCUG 18766 / IAM 14443 / JCM 21226 / LMG 7866 / NBRC 102419 / NCTC 12128 / CDC 0568-73).